A 500-amino-acid chain; its full sequence is NAD(P)H-quinone oxidoreductase chain 4, chloroplastic (500 aa).

Helical transmembrane passes span 4 to 24 (FPWL…LFFF), 37 to 57 (ICIC…HFEL), 87 to 107 (IGPI…AWPV), 113 to 130 (LFYF…GSFS), 134 to 154 (LLLF…LLSM), 167 to 187 (FILY…GIGL), 207 to 227 (IALE…KSPI), 242 to 262 (HYST…YGLV), 272 to 292 (AHSI…IYAA), 305 to 325 (IAYS…SISD), 330 to 350 (GAIL…FLAG), 364 to 384 (MGGL…LSMA), 386 to 406 (LALP…GIIT), 417 to 437 (VITL…LSML), and 463 to 483 (FVAI…DFVF).

Belongs to the complex I subunit 4 family.

It is found in the plastid. The protein resides in the chloroplast thylakoid membrane. The catalysed reaction is a plastoquinone + NADH + (n+1) H(+)(in) = a plastoquinol + NAD(+) + n H(+)(out). It carries out the reaction a plastoquinone + NADPH + (n+1) H(+)(in) = a plastoquinol + NADP(+) + n H(+)(out). The protein is NAD(P)H-quinone oxidoreductase chain 4, chloroplastic of Cucumis sativus (Cucumber).